Consider the following 317-residue polypeptide: Ret finger protein-like 1 (317 aa).

Residues 40 to 82 (CPVCSDYLEKPMSLECGCAVCFKCINSLQKEPHGEDLLCCCCS) form an RING-type zinc finger. One can recognise a B30.2/SPRY domain in the interval 107 to 301 (EPKLKKILQM…DKSVLSICPV (195 aa)).

Post-translationally, phosphorylated by PKC and CDK1. The antiproliferative effect seems to be positively regulated by PKC phosphorylation and negatively by CDK1 phosphorylation. Seems to be expressed in prostate and less abundantly in adult brain, fetal liver, and fetal kidney.

The protein localises to the cytoplasm. It is found in the nucleus. In terms of biological role, negatively regulates the G2-M phase transition, possibly by promoting cyclin B1/CCNB1 and CDK1 proteasomal degradation and thereby preventing their accumulation during interphase. This is Ret finger protein-like 1 (RFPL1) from Homo sapiens (Human).